Here is a 310-residue protein sequence, read N- to C-terminus: Olfactory receptor 5AR1 (310 aa).

At 1–28 (MDKENSSMVTEFIFMGITQDPQMEIIFF) the chain is on the extracellular side. N-linked (GlcNAc...) asparagine glycosylation occurs at asparagine 5. A helical membrane pass occupies residues 29–49 (VVFLIVYLVNVVGNIGMIILI). Topologically, residues 50–58 (TTDTQLHTP) are cytoplasmic. Residues 59–79 (MYFFLCNLSFVDLGYSSAIAP) traverse the membrane as a helical segment. Residues 80-100 (RMLADFLTNHKVISFSSCATQ) are Extracellular-facing. Cysteines 97 and 189 form a disulfide. A helical transmembrane segment spans residues 101–120 (FAFFVGFVDAECYVLAAMAY). Residues 121–139 (GRFVAICRPLHYSTFMSKQ) are Cytoplasmic-facing. Residues 140–160 (VCLALMLGSYLAGLVSLVAHT) traverse the membrane as a helical segment. The Extracellular portion of the chain corresponds to 161 to 205 (TLTFSLSYCGSNIINHFFCEIPPLLALSCSDTYISEILLFSLCGF). The helical transmembrane segment at 206–226 (IEFSTILIIFISYTFILVAII) threads the bilayer. The Cytoplasmic portion of the chain corresponds to 227-239 (RMRSAEGRLKAFS). A helical transmembrane segment spans residues 240–260 (TCGSHLTGITLFYGTVMFMYL). The Extracellular portion of the chain corresponds to 261–271 (RPTSSYSLDQD). A helical transmembrane segment spans residues 272–292 (KWASVFYTVIIPMLNPLIYSL). The Cytoplasmic segment spans residues 293 to 310 (RNKDVKAAFKKLIGKKSQ).

It belongs to the G-protein coupled receptor 1 family.

The protein localises to the cell membrane. Its function is as follows. Odorant receptor. The chain is Olfactory receptor 5AR1 from Homo sapiens (Human).